The chain runs to 341 residues: tRNA N6-adenosine threonylcarbamoyltransferase (341 aa).

Histidine 111 and histidine 115 together coordinate Fe cation. Residues 133 to 137 (AVSGG), aspartate 166, glycine 179, aspartate 183, and asparagine 273 contribute to the substrate site. Aspartate 301 is a binding site for Fe cation.

This sequence belongs to the KAE1 / TsaD family. Fe(2+) serves as cofactor.

The protein resides in the cytoplasm. It carries out the reaction L-threonylcarbamoyladenylate + adenosine(37) in tRNA = N(6)-L-threonylcarbamoyladenosine(37) in tRNA + AMP + H(+). Its function is as follows. Required for the formation of a threonylcarbamoyl group on adenosine at position 37 (t(6)A37) in tRNAs that read codons beginning with adenine. Is involved in the transfer of the threonylcarbamoyl moiety of threonylcarbamoyl-AMP (TC-AMP) to the N6 group of A37, together with TsaE and TsaB. TsaD likely plays a direct catalytic role in this reaction. This Geobacter metallireducens (strain ATCC 53774 / DSM 7210 / GS-15) protein is tRNA N6-adenosine threonylcarbamoyltransferase.